Consider the following 355-residue polypeptide: Methylthioribose-1-phosphate isomerase (355 aa).

Residues 47–49 (RGA), arginine 90, and glutamine 197 contribute to the substrate site. Aspartate 238 functions as the Proton donor in the catalytic mechanism. 248 to 249 (NK) contacts substrate.

Belongs to the eIF-2B alpha/beta/delta subunits family. MtnA subfamily.

The catalysed reaction is 5-(methylsulfanyl)-alpha-D-ribose 1-phosphate = 5-(methylsulfanyl)-D-ribulose 1-phosphate. Its pathway is amino-acid biosynthesis; L-methionine biosynthesis via salvage pathway; L-methionine from S-methyl-5-thio-alpha-D-ribose 1-phosphate: step 1/6. In terms of biological role, catalyzes the interconversion of methylthioribose-1-phosphate (MTR-1-P) into methylthioribulose-1-phosphate (MTRu-1-P). This chain is Methylthioribose-1-phosphate isomerase, found in Herpetosiphon aurantiacus (strain ATCC 23779 / DSM 785 / 114-95).